The sequence spans 1782 residues: Signal-induced proliferation-associated 1-like protein 1 (1782 aa).

Disordered regions lie at residues 1-28, 47-125, and 140-171; these read MTSL…GAPK, GSSV…VSLN, and KNKT…RRIR. Residues 84–94 are compositionally biased toward basic and acidic residues; sequence PPRKENVKESS. The span at 95-125 shows a compositional bias: low complexity; it reads RSSQEIETSSCLESLSSKGSPVSQGSSVSLN. Phosphoserine occurs at positions 162, 187, 193, 208, 255, and 288. The interval 277–297 is disordered; that stretch reads EREKPLKRRSKSETGDSSIFR. The Rap-GAP domain occupies 599–816; the sequence is LMKLDEQGLN…RTRQEYLKDL (218 aa). The 79-residue stretch at 953 to 1031 folds into the PDZ domain; it reads EMTLRRNGLG…VVIIPPHDDC (79 aa). 2 disordered regions span residues 1069-1128 and 1144-1213; these read QRNA…RLSP and SQCR…SLAD. 7 positions are modified to phosphoserine: Ser-1078, Ser-1087, Ser-1116, Ser-1127, Ser-1149, Ser-1170, and Ser-1181. A compositionally biased stretch (polar residues) spans 1080–1093; that stretch reads QVPSQLQSPMTSRL. The segment covering 1149-1159 has biased composition (low complexity); it reads SPSNLSSSSET. Over residues 1186-1205 the composition is skewed to polar residues; the sequence is DRQNTQSDISGSGKSTPSWQ. Residues Ser-1234 and Ser-1249 each carry the phosphoserine modification. The tract at residues 1247-1285 is disordered; it reads HLSPNKQGHSDSHYSSHSSSNTLSSNASSAHSDEKWYDG. Low complexity predominate over residues 1261-1276; that stretch reads SSHSSSNTLSSNASSA. Phosphoserine; by PLK2 is present on Ser-1305. The interval 1307–1342 is disordered; the sequence is IDTASYGPSHGSTASLGASTSSPRSGPGKEKVAPLW. A Phosphothreonine; by PLK2 modification is found at Thr-1309. Residues 1315–1328 show a composition bias toward low complexity; the sequence is SHGSTASLGASTSS. Phosphoserine; by CDK5 is present on Ser-1328. Ser-1345 is subject to Phosphoserine. Residues 1358–1368 show a composition bias toward basic and acidic residues; it reads TEGHGMDRKAE. A disordered region spans residues 1358–1454; that stretch reads TEGHGMDRKA…SSSGPRTFYP (97 aa). Ser-1369, Ser-1370, Ser-1391, Ser-1410, and Ser-1412 each carry phosphoserine. Residues 1378–1410 are compositionally biased toward polar residues; it reads KSQGGSSPLSRENSTFSINDAASHTSTMSSRHS. Positions 1432-1447 are enriched in low complexity; it reads SSQLAPSFSSSSSSSS. Phosphoserine is present on residues Ser-1507 and Ser-1528. A Phosphothreonine modification is found at Thr-1530. Phosphoserine is present on residues Ser-1533, Ser-1544, Ser-1547, Ser-1564, and Ser-1567. Residue Arg-1580 is modified to Asymmetric dimethylarginine. A phosphoserine mark is found at Ser-1582, Ser-1624, Ser-1626, Ser-1629, Ser-1687, Ser-1690, Ser-1707, Ser-1708, and Ser-1712. The disordered stretch occupies residues 1625–1647; it reads ASDSSLTDIQETRRQPIPDPGLM. Positions 1713 to 1773 form a coiled coil; sequence PTLASKVDQL…ASDKLKKFTE (61 aa).

In terms of assembly, interacts with DLG4, PDLIM5, PDLIM7 and LZTS3. Interacts with the actin cytoskeleton. Interacts (via PDZ domain) with EPHA4 (via PDZ motif); controls neuronal morphology through regulation of the RAP1 (RAP1A or RAP1B) and RAP2 (RAP2A, RAP2B or RAP2C) GTPases. In terms of processing, ubiquitinated and degraded by the SCF(BTRC) following phosphorylation by PLK2. Post-translationally, phosphorylated at Ser-1328 by CDK5, creating a docking site for the POLO box domains of PLK2. Subsequently, PLK2 binds and phosphorylates SIPA1L1, leading to ubiquitination and degradation by the proteasome.

It localises to the cytoplasm. The protein resides in the cytoskeleton. Its subcellular location is the postsynaptic density. The protein localises to the synapse. It is found in the synaptosome. Stimulates the GTPase activity of RAP2A. Promotes reorganization of the actin cytoskeleton and recruits DLG4 to F-actin. Contributes to the regulation of dendritic spine morphogenesis. This chain is Signal-induced proliferation-associated 1-like protein 1 (Sipa1l1), found in Mus musculus (Mouse).